The sequence spans 190 residues: Pyridoxal 5'-phosphate synthase subunit PdxT (190 aa).

46-48 (GES) contributes to the L-glutamine binding site. The active-site Nucleophile is C78. Residues R108 and 137 to 138 (IR) each bind L-glutamine. Residues H174 and E176 each act as charge relay system in the active site.

This sequence belongs to the glutaminase PdxT/SNO family. In the presence of PdxS, forms a dodecamer of heterodimers. Only shows activity in the heterodimer.

It carries out the reaction aldehydo-D-ribose 5-phosphate + D-glyceraldehyde 3-phosphate + L-glutamine = pyridoxal 5'-phosphate + L-glutamate + phosphate + 3 H2O + H(+). It catalyses the reaction L-glutamine + H2O = L-glutamate + NH4(+). Its pathway is cofactor biosynthesis; pyridoxal 5'-phosphate biosynthesis. Catalyzes the hydrolysis of glutamine to glutamate and ammonia as part of the biosynthesis of pyridoxal 5'-phosphate. The resulting ammonia molecule is channeled to the active site of PdxS. This Chloroflexus aggregans (strain MD-66 / DSM 9485) protein is Pyridoxal 5'-phosphate synthase subunit PdxT.